The following is a 115-amino-acid chain: U3-lycotoxin-Ls1f (115 aa).

The signal sequence occupies residues 1–20 (MKFVLLFGVLLVTLFSYSSA). The propeptide occupies 21 to 44 (EMLDDFDQADEDELLSLIEKEEAR). Cystine bridges form between Cys48/Cys63, Cys55/Cys72, Cys62/Cys87, and Cys74/Cys85.

The protein belongs to the neurotoxin 19 (CSTX) family. 01 subfamily. Expressed by the venom gland.

It is found in the secreted. This chain is U3-lycotoxin-Ls1f, found in Lycosa singoriensis (Wolf spider).